Here is a 581-residue protein sequence, read N- to C-terminus: NADH-quinone oxidoreductase subunit C/D (581 aa).

The NADH dehydrogenase I subunit C stretch occupies residues 1 to 172 (MSAFELVTEL…PLFNMTASLF (172 aa)). Residues 196–581 (ELMILNYGPH…IDYVMSDVDR (386 aa)) are NADH dehydrogenase I subunit D.

This sequence in the N-terminal section; belongs to the complex I 30 kDa subunit family. It in the C-terminal section; belongs to the complex I 49 kDa subunit family. As to quaternary structure, NDH-1 is composed of 13 different subunits. Subunits NuoB, CD, E, F, and G constitute the peripheral sector of the complex.

The protein localises to the cell inner membrane. The catalysed reaction is a quinone + NADH + 5 H(+)(in) = a quinol + NAD(+) + 4 H(+)(out). Its function is as follows. NDH-1 shuttles electrons from NADH, via FMN and iron-sulfur (Fe-S) centers, to quinones in the respiratory chain. The immediate electron acceptor for the enzyme in this species is believed to be ubiquinone. Couples the redox reaction to proton translocation (for every two electrons transferred, four hydrogen ions are translocated across the cytoplasmic membrane), and thus conserves the redox energy in a proton gradient. The sequence is that of NADH-quinone oxidoreductase subunit C/D from Rhodopseudomonas palustris (strain ATCC BAA-98 / CGA009).